The primary structure comprises 314 residues: Olfactory receptor 51G2 (314 aa).

The Extracellular portion of the chain corresponds to 1 to 30 (MTLGSLGNSSSSVSATFLLSGIPGLERMHI). Asparagine 8 is a glycosylation site (N-linked (GlcNAc...) asparagine). A helical transmembrane segment spans residues 31-51 (WISIPLCFMYLVSIPGNCTIL). The Cytoplasmic segment spans residues 52 to 59 (FIIKTERS). Residues 60-80 (LHEPMYLFLSMLALIDLGLSL) traverse the membrane as a helical segment. Residues 81 to 104 (CTLPTVLGIFWVGAREISHDACFA) lie on the Extracellular side of the membrane. Cysteine 102 and cysteine 194 are disulfide-bonded. The chain crosses the membrane as a helical span at residues 105–125 (QLFFIHCFSFLESSVLLSMAF). The Cytoplasmic portion of the chain corresponds to 126–144 (DRFVAICHPLHYVSILTNT). The chain crosses the membrane as a helical span at residues 145–165 (VIGRIGLVSLGRSVALIFPLP). Topologically, residues 166–201 (FMLKRFPYCGSPVLSHSYCLHQEVMKLACADMKANS) are extracellular. A helical membrane pass occupies residues 202–222 (IYGMFVIVSTVGIDSLLILFS). The Cytoplasmic segment spans residues 223-242 (YALILRTVLSIASRAERFKA). A helical membrane pass occupies residues 243 to 263 (LNTCVSHICAVLLFYTPMIGL). The Extracellular segment spans residues 264–278 (SVIHRFGKQAPHLVQ). A helical transmembrane segment spans residues 279-299 (VVMGFMYLLFPPVMNPIVYSV). Residues 300 to 314 (KTKQIRDRVTHAFCY) are Cytoplasmic-facing.

It belongs to the G-protein coupled receptor 1 family.

The protein resides in the cell membrane. In terms of biological role, odorant receptor. In Homo sapiens (Human), this protein is Olfactory receptor 51G2 (OR51G2).